Consider the following 250-residue polypeptide: Tetrahydromethanopterin S-methyltransferase subunit D (250 aa).

The next 6 membrane-spanning stretches (helical) occupy residues Ile9–Val29, Gly47–Met67, Ile86–Val106, Ile144–Val164, Leu184–Ser204, and Leu230–Ile250.

This sequence belongs to the MtrD family. In terms of assembly, the complex is composed of 8 subunits; MtrA, MtrB, MtrC, MtrD, MtrE, MtrF, MtrG and MtrH.

It localises to the cell membrane. It carries out the reaction 5-methyl-5,6,7,8-tetrahydromethanopterin + coenzyme M + 2 Na(+)(in) = 5,6,7,8-tetrahydromethanopterin + methyl-coenzyme M + 2 Na(+)(out). It participates in one-carbon metabolism; methanogenesis from CO(2); methyl-coenzyme M from 5,10-methylene-5,6,7,8-tetrahydromethanopterin: step 2/2. In terms of biological role, part of a complex that catalyzes the formation of methyl-coenzyme M and tetrahydromethanopterin from coenzyme M and methyl-tetrahydromethanopterin. This is an energy-conserving, sodium-ion translocating step. The sequence is that of Tetrahydromethanopterin S-methyltransferase subunit D from Methanosarcina barkeri (strain Fusaro / DSM 804).